The chain runs to 95 residues: Cytochrome b (95 aa).

The next 3 helical transmembrane spans lie at 1-16, 40-61, and 76-95; these read GLCL…FLAM, WLIR…YLHI, and WNIG…VGYV. The heme b site is built by H46 and H60.

This sequence belongs to the cytochrome b family. As to quaternary structure, the cytochrome bc1 complex contains 3 respiratory subunits (MT-CYB, CYC1 and UQCRFS1), 2 core proteins (UQCRC1 and UQCRC2) and probably 6 low-molecular weight proteins. The cofactor is heme b.

It is found in the mitochondrion inner membrane. Its function is as follows. Component of the ubiquinol-cytochrome c reductase complex (complex III or cytochrome b-c1 complex) that is part of the mitochondrial respiratory chain. The b-c1 complex mediates electron transfer from ubiquinol to cytochrome c. Contributes to the generation of a proton gradient across the mitochondrial membrane that is then used for ATP synthesis. This chain is Cytochrome b (mt-cyb), found in Gomphosus varius (Bird wrasse).